We begin with the raw amino-acid sequence, 517 residues long: TBC1 domain family member 22A (517 aa).

Ala2 carries the N-acetylalanine modification. Residues 103 to 191 (RNHSQRQGRP…PSTLSSSALS (89 aa)) are disordered. 3 positions are modified to phosphoserine: Ser132, Ser145, and Ser167. Residues 163-174 (QRSQSLPHSATV) show a composition bias toward polar residues. Residues 176–190 (LGGTSDPSTLSSSAL) show a composition bias toward low complexity. In terms of domain architecture, Rab-GAP TBC spans 222–446 (GIPKPVRPMT…RLWDTYQSEP (225 aa)).

As to quaternary structure, homodimer. Interacts with ACBD3 and ARFGEF1. Interacts with YWHAB, YWHAE, YWHAG, YWHAH, YWHAQ and YWHAZ.

May act as a GTPase-activating protein for Rab family protein(s). This Homo sapiens (Human) protein is TBC1 domain family member 22A (TBC1D22A).